Here is a 309-residue protein sequence, read N- to C-terminus: uncharacterized protein (309 aa).

This sequence belongs to the anthranilate phosphoribosyltransferase family.

This is an uncharacterized protein from Aquifex aeolicus (strain VF5).